The following is a 233-amino-acid chain: MVHRPRLLCLHGGGASSQIMRVQFSKLESALRKTFQLVFLEGPLDSAPGPGVLPFFEDFGPYSCWVSDDKSLLPEEKRKEENNAIAYIKTFMLQYGPFAGILGFSQGARATASILLEQQREAFTHDALFGVFFCGTFPPFIPDAPDISLPTVHILGLTDPYLRESEELLEHCTQQSVRRVIKFNGGHHMPTSSDVTQKIADVITMTYRTSQRKKVSNIWRKKVPDCRSLALES.

Catalysis depends on charge relay system residues Ser-105, Asp-159, and His-187.

It belongs to the LovG family.

Functionally, esterase; part of the gene cluster that mediates the biosynthesis of the mycotoxin fusarin C. Within the cluster, FUS1, FUS2, FUS8 and FUS9 are sufficient for fusarin production. The other FUS cluster members are not essential for fusarin C biosynthesis. In Gibberella fujikuroi (strain CBS 195.34 / IMI 58289 / NRRL A-6831) (Bakanae and foot rot disease fungus), this protein is Esterase FUS5.